Consider the following 535-residue polypeptide: Peptide chain release factor 3 (535 aa).

Residues 8 to 277 (KRRRTFAIIS…TLVDLAPPPG (270 aa)) enclose the tr-type G domain. GTP-binding positions include 17–24 (SHPDAGKT), 85–89 (DTPGH), and 139–142 (NKLD).

It belongs to the TRAFAC class translation factor GTPase superfamily. Classic translation factor GTPase family. PrfC subfamily.

The protein localises to the cytoplasm. Functionally, increases the formation of ribosomal termination complexes and stimulates activities of RF-1 and RF-2. It binds guanine nucleotides and has strong preference for UGA stop codons. It may interact directly with the ribosome. The stimulation of RF-1 and RF-2 is significantly reduced by GTP and GDP, but not by GMP. In Nitrosomonas eutropha (strain DSM 101675 / C91 / Nm57), this protein is Peptide chain release factor 3.